We begin with the raw amino-acid sequence, 138 residues long: Large ribosomal subunit protein uL16 (138 aa).

It belongs to the universal ribosomal protein uL16 family. In terms of assembly, part of the 50S ribosomal subunit.

Its function is as follows. Binds 23S rRNA and is also seen to make contacts with the A and possibly P site tRNAs. The polypeptide is Large ribosomal subunit protein uL16 (Chlamydia pneumoniae (Chlamydophila pneumoniae)).